The following is a 101-amino-acid chain: Gamma-secretase subunit PEN-2 (101 aa).

The Cytoplasmic segment spans residues 1 to 17 (MNLERVSNEEKLNLCRK). Residues 18 to 36 (YYLGGFAFLPFLWLVNIFW) constitute an intramembrane region (helical). The Cytoplasmic segment spans residues 37-57 (FFKEAFFAPAYTEQSQIKGYV). A helical transmembrane segment spans residues 58-78 (WRSAVGFLFWVIVLTTWITIF). The Lumenal segment spans residues 79-101 (QIYRPRWGALGDYLSFTIPLGTP).

Belongs to the PEN-2 family. In terms of assembly, the functional gamma-secretase complex is composed of at least four polypeptides: a presenilin homodimer (PSEN1 or PSEN2), nicastrin (NCSTN), APH1 (APH1A or APH1B) and PSENEN.

The protein resides in the endoplasmic reticulum membrane. Its subcellular location is the golgi apparatus. It localises to the golgi stack membrane. It is found in the cell membrane. The protein localises to the membrane. Its function is as follows. Essential subunit of the gamma-secretase complex, an endoprotease complex that catalyzes the intramembrane cleavage of integral membrane proteins such as Notch receptors and APP (amyloid-beta precursor protein). The gamma-secretase complex plays a role in Notch and Wnt signaling cascades and regulation of downstream processes via its role in processing key regulatory proteins, and by regulating cytosolic CTNNB1 levels. PSENEN modulates both endoproteolysis of presenilin and gamma-secretase activity. This is Gamma-secretase subunit PEN-2 (Psenen) from Rattus norvegicus (Rat).